Reading from the N-terminus, the 239-residue chain is Sugar fermentation stimulation protein homolog (239 aa).

It belongs to the SfsA family.

This chain is Sugar fermentation stimulation protein homolog, found in Methylobacterium sp. (strain 4-46).